Reading from the N-terminus, the 425-residue chain is Dihydroorotase (425 aa).

Residues H56 and H58 each coordinate Zn(2+). Substrate-binding positions include 58–60 and N90; that span reads HYR. Zn(2+) is bound by residues D148, H175, and H228. N274 contributes to the substrate binding site. D301 provides a ligand contact to Zn(2+). The active site involves D301. Residues H305 and 319–320 each bind substrate; that span reads FG.

Belongs to the metallo-dependent hydrolases superfamily. DHOase family. Class I DHOase subfamily. Zn(2+) is required as a cofactor.

It carries out the reaction (S)-dihydroorotate + H2O = N-carbamoyl-L-aspartate + H(+). The protein operates within pyrimidine metabolism; UMP biosynthesis via de novo pathway; (S)-dihydroorotate from bicarbonate: step 3/3. Its function is as follows. Catalyzes the reversible cyclization of carbamoyl aspartate to dihydroorotate. This is Dihydroorotase from Lactobacillus helveticus (strain DPC 4571).